The chain runs to 86 residues: Omega-theraphotoxin-Hhn1d (86 aa).

The first 21 residues, 1–21, serve as a signal peptide directing secretion; sequence MKSIVFVALFGLALLAVVCSA. Positions 22–50 are excised as a propeptide; sequence SEDAHKELLKEVVRAMVVDKTDAVQAEER. Intrachain disulfides connect C52–C66, C59–C71, and C65–C78.

The protein belongs to the neurotoxin 10 (Hwtx-1) family. 17 (Hntx-9) subfamily. In terms of tissue distribution, expressed by the venom gland.

It localises to the secreted. In terms of biological role, ion channel inhibitor. The chain is Omega-theraphotoxin-Hhn1d from Cyriopagopus hainanus (Chinese bird spider).